The sequence spans 733 residues: Phosphoribosylformylglycinamidine synthase subunit PurL (733 aa).

The active site involves His44. ATP-binding residues include Tyr47 and Lys86. Glu88 serves as a coordination point for Mg(2+). Residues 89 to 92 and Arg111 contribute to the substrate site; that span reads SHNH. Catalysis depends on His90, which acts as the Proton acceptor. Asp112 contacts Mg(2+). Residue Gln233 participates in substrate binding. Asp261 serves as a coordination point for Mg(2+). Position 305–307 (305–307) interacts with substrate; that stretch reads ESQ. ATP is bound by residues Asp492 and Gly529. Asn530 lines the Mg(2+) pocket. Substrate is bound at residue Ser532.

Belongs to the FGAMS family. In terms of assembly, monomer. Part of the FGAM synthase complex composed of 1 PurL, 1 PurQ and 2 PurS subunits.

It is found in the cytoplasm. It carries out the reaction N(2)-formyl-N(1)-(5-phospho-beta-D-ribosyl)glycinamide + L-glutamine + ATP + H2O = 2-formamido-N(1)-(5-O-phospho-beta-D-ribosyl)acetamidine + L-glutamate + ADP + phosphate + H(+). The protein operates within purine metabolism; IMP biosynthesis via de novo pathway; 5-amino-1-(5-phospho-D-ribosyl)imidazole from N(2)-formyl-N(1)-(5-phospho-D-ribosyl)glycinamide: step 1/2. Part of the phosphoribosylformylglycinamidine synthase complex involved in the purines biosynthetic pathway. Catalyzes the ATP-dependent conversion of formylglycinamide ribonucleotide (FGAR) and glutamine to yield formylglycinamidine ribonucleotide (FGAM) and glutamate. The FGAM synthase complex is composed of three subunits. PurQ produces an ammonia molecule by converting glutamine to glutamate. PurL transfers the ammonia molecule to FGAR to form FGAM in an ATP-dependent manner. PurS interacts with PurQ and PurL and is thought to assist in the transfer of the ammonia molecule from PurQ to PurL. The chain is Phosphoribosylformylglycinamidine synthase subunit PurL from Thermomicrobium roseum (strain ATCC 27502 / DSM 5159 / P-2).